An 882-amino-acid polypeptide reads, in one-letter code: Protein PML (882 aa).

The segment at 1–48 (MEPAPARSPRPQQDPARPQEPTMPPPETPSEGRQPSPSPSPTERAPAS) is disordered. Residue serine 8 is modified to Phosphoserine; by HIPK2. 2 positions are modified to phosphoserine; by HIPK2 and MAPK1: serine 36 and serine 38. Residue serine 48 is modified to Phosphoserine. Positions 57 and 60 each coordinate Zn(2+). The segment at 57–92 (CQQCQAEAKCPKLLPCLHTLCSGCLEASGMQCPICQ) adopts an RING-type zinc-finger fold. Residue lysine 65 forms a Glycyl lysine isopeptide (Lys-Gly) (interchain with G-Cter in SUMO1); alternate linkage. Lysine 65 is covalently cross-linked (Glycyl lysine isopeptide (Lys-Gly) (interchain with G-Cter in SUMO2); alternate). The Zn(2+) site is built by cysteine 72, histidine 74, cysteine 77, cysteine 80, cysteine 88, and cysteine 91. Serine 117 is modified (phosphoserine; by CHEK2). Residues 124 to 166 (DAQAVCTRCKESADFWCFECEQLLCAKCFEAHQWFLKHEARPL) form a B box-type 1; atypical zinc finger. Zn(2+)-binding residues include cysteine 129, cysteine 132, cysteine 151, and histidine 155. Lysine 160 participates in a covalent cross-link: Glycyl lysine isopeptide (Lys-Gly) (interchain with G-Cter in SUMO1); alternate. Residue lysine 160 forms a Glycyl lysine isopeptide (Lys-Gly) (interchain with G-Cter in SUMO2); alternate linkage. A Glycyl lysine isopeptide (Lys-Gly) (interchain with G-Cter in SUMO1P1/SUMO5); alternate cross-link involves residue lysine 160. Residues 183 to 236 (KTNNIFCSNPNHRTPTLTSIYCRGCSKPLCCSCALLDSSHSELKCDISAEIQQR) form a B box-type 2 zinc finger. Residues cysteine 189, histidine 194, cysteine 215, and histidine 222 each contribute to the Zn(2+) site. Positions 228-253 (DISAEIQQRQEELDAMTQALQEQDSA) form a coiled coil. A Glycyl lysine isopeptide (Lys-Gly) (interchain with G-Cter in SUMO2); alternate cross-link involves residue lysine 380. Lysine 380 is covalently cross-linked (Glycyl lysine isopeptide (Lys-Gly) (interchain with G-Cter in /SUMO5); alternate). Lysine 380 is covalently cross-linked (Glycyl lysine isopeptide (Lys-Gly) (interchain with G-Cter in ubiquitin); alternate). A Glycyl lysine isopeptide (Lys-Gly) (interchain with G-Cter in SUMO2) cross-link involves residue lysine 394. Residue lysine 400 forms a Glycyl lysine isopeptide (Lys-Gly) (interchain with G-Cter in SUMO1P1/SUMO5); alternate linkage. Residues lysine 400 and lysine 401 each participate in a glycyl lysine isopeptide (Lys-Gly) (interchain with G-Cter in ubiquitin); alternate cross-link. Residue lysine 401 forms a Glycyl lysine isopeptide (Lys-Gly) (interchain with G-Cter in SUMO2); alternate linkage. Serine 403 carries the post-translational modification Phosphoserine; by MAPK1 and MAPK7. The segment at 448–555 (GAHPVPVYAF…ASGAGEAEER (108 aa)) is interaction with PER2. A Glycyl lysine isopeptide (Lys-Gly) (interchain with G-Cter in SUMO2) cross-link involves residue lysine 460. The disordered stretch occupies residues 467–589 (DVSNTTTAQK…SESSDLQLEG (123 aa)). Residues 468–484 (VSNTTTAQKRKCSQTQC) show a composition bias toward polar residues. Lysine 476 is covalently cross-linked (Glycyl lysine isopeptide (Lys-Gly) (interchain with G-Cter in SUMO2); alternate). Lysine 476 is covalently cross-linked (Glycyl lysine isopeptide (Lys-Gly) (interchain with G-Cter in ubiquitin); alternate). Positions 476-490 (KRKCSQTQCPRKVIK) match the Nuclear localization signal motif. Lysine 478 participates in a covalent cross-link: Glycyl lysine isopeptide (Lys-Gly) (interchain with G-Cter in SUMO2). Glycyl lysine isopeptide (Lys-Gly) (interchain with G-Cter in SUMO2); alternate cross-links involve residues lysine 487 and lysine 490. Lysine 487 carries the N6-acetyllysine; alternate modification. Positions 489–501 (IKMESEEGKEARL) are enriched in basic and acidic residues. A Glycyl lysine isopeptide (Lys-Gly) (interchain with G-Cter in SUMO1); alternate cross-link involves residue lysine 490. Residue lysine 490 forms a Glycyl lysine isopeptide (Lys-Gly) (interchain with G-Cter in SUMO1P1/SUMO5); alternate linkage. Serine 493 carries the post-translational modification Phosphoserine. Residue lysine 497 forms a Glycyl lysine isopeptide (Lys-Gly) (interchain with G-Cter in SUMO1); alternate linkage. Lysine 497 participates in a covalent cross-link: Glycyl lysine isopeptide (Lys-Gly) (interchain with G-Cter in SUMO2); alternate. Residue lysine 497 forms a Glycyl lysine isopeptide (Lys-Gly) (interchain with G-Cter in SUMO1P1/SUMO5); alternate linkage. Serine 504 is subject to Phosphoserine. Phosphoserine; by MAPK1 is present on serine 505. Polar residues predominate over residues 505–516 (SPEQPRPSTSKA). Residue serine 512 is modified to Phosphoserine. The residue at position 515 (lysine 515) is an N6-acetyllysine. Phosphoserine is present on residues serine 518, serine 527, and serine 530. Serine 518 bears the Phosphoserine; by CDK1 and CDK2 mark. Residues serine 527 and serine 530 each carry the phosphoserine; by MAPK1 modification. A sumo interaction motif (SIM) region spans residues 556-562 (VVVISSS). A Phosphoserine modification is found at serine 565. Serine 565 bears the Phosphoserine; by CK2 mark. Threonine 867 carries the post-translational modification Phosphothreonine.

As to quaternary structure, key component of PML bodies. PML bodies are formed by the interaction of PML homodimers (via SUMO-binding motif) with sumoylated PML, leading to the assembly of higher oligomers. Several types of PML bodies have been observed. PML bodies can form hollow spheres that can sequester target proteins inside. Interacts (via SUMO-binding motif) with sumoylated proteins. Interacts (via C-terminus) with p53/TP53. Recruits p53/TP53 and CHEK2 into PML bodies, which promotes p53/TP53 phosphorylation at 'Ser-20' and prevents its proteasomal degradation. Interacts with MDM2, and sequesters MDM2 in the nucleolus, thereby preventing ubiquitination of p53/TP53. Interaction with PML-RARA oncoprotein and certain viral proteins causes disassembly of PML bodies and abolishes the normal PML function. Interacts with HIPK2, TERT, SIRT1, TOPBP1, TRIM27 and TRIM69. Interacts with ELF4 (via C-terminus). Interacts with ITPR3. Interacts (in the cytoplasm) with TGFBR1, TGFBR2 and PKM. Interacts (via the coiled-coil domain and when sumoylated) with SATB1. Interacts with UBE2I; the interaction is enhanced by arsenic binding. Interacts (PML-RARA oncoprotein, via the coiled-coil domain) with UBE2I; the interaction is enhanced by arsenic binding and is required for PML-RARA oncoprotein sumoylation and inhibition of RARA transactivational activity. Interacts with RB1, PPP1A, SMAD2, SMAD3, DAXX, RPL11 and MTOR. Interacts with PPARGC1A and KAT2A. Interacts with CSNK2A1 and CSNK2A3. Interacts with ANKRD2; the interaction is direct. Interacts (via SUMO-interacting motif) with sumoylated MORC3. Isoform PML-1, isoform PML-2, isoform PML-3, isoform PML-4, isoform PML-5 and isoform PML-6 interact with RNF4. Isoform PML-1 interacts with NLRP3. Isoform PML-1, isoform PML-2, isoform PML-3, isoform PML-4 and isoform PML-5 interact with MAGEA2, RBL2, PER2 and E2F4. Isoform PML-2 interacts with CIITA. Isoform PML-2, isoform PML-3 and isoform PML-4 interact with TBX2. Isoform PML-4 interacts with RANBP2, HDAC7, KAT6A, WRN, PIN1, TBX3 and phosphorylated MAPK1/ERK2. Isoform PML-4 interacts with the CTNNB1 and TCF7L2/TCF4 complex. Isoform PML-4 preferentially interacts with MAPK7/BMK1 although other isoforms (isoform PML-1, isoform PML-2, isoform PML-3 and isoform PML-6) also interact with it. Isoform PML-12 interacts with PIAS1, PIAS2 (isoform PIAS2-alpha) and CSNK2A1/CK2. Interacts with TRIM16. Interacts with PRDM1/Blimp-1. Interacts (via RING-type zinc finger) with EIF4E; the interaction results in conformational changes of both interacting proteins and reduces EIF4E affinity for the 5' m7G cap of mRNA, thus reducing EIF4E-mediated mRNA nuclear export. In terms of assembly, (Microbial infection) Interacts with Lassa virus Z protein and rabies virus phosphoprotein. (Microbial infection) Isoform PML-1 interacts with herpes simplex virus-1/HHV-1 ICP0. As to quaternary structure, (Microbial infection) Isoform PML-2 interacts with human adenovirus 2 E1A and this interaction stimulates E1A-dependent transcriptional activation. In terms of assembly, (Microbial infection) Isoform PML-4 interacts with VZV capsid protein VP26/ORF23 capsid protein. (Microbial infection) The sumoylated isoform PML-4 interacts with encephalomyocarditis virus (EMCV) RNA-directed RNA polymerase 3D-POL (P3D-POL). As to quaternary structure, (Microbial infection) Isoform PML-6 interacts with moloney murine leukemia virus (MoMLV) integrase (IN) and reverse transcriptase (RT). In terms of assembly, (Microbial infection) Isoform PML-4 and isoform PML-5 interact with human adenovirus 5 E1B-55K protein; these interactions promote efficient subnuclear targeting of E1B-55K to PML nuclear bodies. (Microbial infection) Isoform PML-3 interacts (via RING-type zinc finger) with human foamy virus bel1/tas and bet. As to quaternary structure, (Microbial infection) Interacts with human cytomegalovirus (HHV-5) immediate early protein IE1; this interaction mediates PML desumoylation and PML-mediated sumoylation of IE1. Ubiquitinated; mediated by RNF4, RNF111, UHRF1, UBE3A/E6AP, BCR(KLHL20) E3 ubiquitin ligase complex E3 ligase complex, SIAH1 or SIAH2 and leading to subsequent proteasomal degradation. Ubiquitination by BCR(KLHL20) E3 ubiquitin ligase complex E3 ligase complex requires CDK1/2-mediated phosphorylation at Ser-518 which in turn is recognized by prolyl-isopeptidase PIN1 and PIN1-catalyzed isomerization further potentiates PML interaction with KLHL20. 'Lys-6'-, 'Lys-11'-, 'Lys-48'- and 'Lys-63'-linked polyubiquitination by RNF4 is polysumoylation-dependent. Ubiquitination by RNF111 is polysumoylation-dependent. Post-translationally, sumoylation regulates PML's: stability in response to extracellular or intracellular stimuli, transcription directly and indirectly, through sequestration of or dissociation of the transcription factors from PML-NBs, ability to regulate apoptosis and its anti-viral activities. It is also essential for: maintaining proper PML nuclear bodies (PML-NBs) structure and normal function, recruitment of components of PML-NBs, the turnover and retention of PML in PML-NBs and the integrity of PML-NBs. Undergoes 'Lys-11'-linked sumoylation. Sumoylation on all three sites (Lys-65, Lys-160 and Lys-490) is required for nuclear body formation. Sumoylation on Lys-160 is a prerequisite for sumoylation on Lys-65. Lys-65 and Lys-160 are sumoylated by PISA1 and PIAS2. PIAS1-mediated sumoylation of PML promotes its interaction with CSNK2A1/CK2 and phosphorylation at Ser-565 which in turn triggers its ubiquitin-mediated degradation. PIAS1-mediated sumoylation of PML-RARA promotes its ubiquitin-mediated degradation. The PML-RARA fusion protein requires the coiled-coil domain for sumoylation. Sumoylation at Lys-490 by RANBP2 is essential for the proper assembly of PML-NBs. SUMO1P1/SUMO5 conjugated PML at Lys-160, Lys-380, Lys-400, Lys-490 and Lys-497, but Lys-380, Lys-400 and Lys-497 are not key acceptor lysines. SUMO1P1/SUMO5 forms polymeric chain on Lys-160 of PML by successive conjugation at 'Lys-18'; facilitating recruitment of PML-NB components, which enlarges PML. SUMO1P1/SUMO5 conjugation of PML increases SUMO2/3 conjugation, which leads to the recruitment of RNF4 and ubiquitin-dependent disintegration of PML-NBs. SUMO1P1/SUMO5 monoconjugated Lys-490. DNA damage triggers its sumoylation while some but not all viral infections can abolish sumoylation. Desumoylated by SENP1, SENP2, SENP3, SENP5 and SENP6. Arsenic induces PML and PML-RARA polysumoylation and their subsequent RNF4-dependent ubiquitination and proteasomal degradation, and is used as treatment in acute promyelocytic leukemia (APL). The nuclear isoforms (isoform PML-1, isoform PML-2, isoform PML-3, isoform PML-4, isoform PML-5 and isoform PML-6) show an increased sumoylation in response to arsenic trioxide. The cytoplasmic isoform PML-7 is not sumoylated. In terms of processing, phosphorylation is a major regulatory mechanism that controls PML protein abundance and the number and size of PML nuclear bodies (PML-NBs). Phosphorylated in response to DNA damage, probably by ATR. HIPK2-mediated phosphorylation at Ser-8, Ser-36 and Ser-38 leads to increased accumulation of PML protein and its sumoylation and is required for the maximal pro-apoptotic activity of PML after DNA damage. CHEK2-mediated phosphorylation at Ser-117 is important for PML-mediated apoptosis following DNA damage. MAPK1-mediated phosphorylations at Ser-403, Ser-505, Ser-527 and Ser-530 and CDK1/2-mediated phosphorylation at Ser-518 promote PIN1-dependent PML degradation. CK2-mediated phosphorylation at Ser-565 primes PML ubiquitination via an unidentified ubiquitin ligase. (Microbial infection) Upon infection with Epstein-Barr virus, phosphorylated by CK2. Viral EBNA1 increases the association of CK2 with PML proteins, which increases PML phosphorylation by CK2, triggering the USP7-dependent polyubiquitylation and degradation of PML. Post-translationally, acetylation at Lys-487 is essential for its nuclear localization. Deacetylated at Lys-487 by SIRT1 and this deacetylation promotes PML control of PER2 nuclear localization. In terms of processing, (Microbial infection) Immediate early protein IE1 of human cytomegalovirus (HHV-5) interferes with the sumoylation of PML. Immediate early protein IE1 inhibits PML de novo sumoylation. (Microbial infection) Cleaved at two different sites by enterovirus 71 protease 3C, leading to impaired PML-Nuclear bodies formation.

It is found in the nucleus. Its subcellular location is the nucleoplasm. The protein localises to the cytoplasm. The protein resides in the PML body. It localises to the nucleolus. It is found in the endoplasmic reticulum membrane. Its subcellular location is the early endosome membrane. It functions in the pathway protein modification; protein sumoylation. Its function is as follows. Functions via its association with PML-nuclear bodies (PML-NBs) in a wide range of important cellular processes, including tumor suppression, transcriptional regulation, apoptosis, senescence, DNA damage response, and viral defense mechanisms. Acts as the scaffold of PML-NBs allowing other proteins to shuttle in and out, a process which is regulated by SUMO-mediated modifications and interactions. Inhibits EIF4E-mediated mRNA nuclear export by reducing EIF4E affinity for the 5' 7-methylguanosine (m7G) cap of target mRNAs. Isoform PML-4 has a multifaceted role in the regulation of apoptosis and growth suppression: activates RB1 and inhibits AKT1 via interactions with PP1 and PP2A phosphatases respectively, negatively affects the PI3K pathway by inhibiting MTOR and activating PTEN, and positively regulates p53/TP53 by acting at different levels (by promoting its acetylation and phosphorylation and by inhibiting its MDM2-dependent degradation). Isoform PML-4 also: acts as a transcriptional repressor of TBX2 during cellular senescence and the repression is dependent on a functional RBL2/E2F4 repressor complex, regulates double-strand break repair in gamma-irradiation-induced DNA damage responses via its interaction with WRN, acts as a negative regulator of telomerase by interacting with TERT, and regulates PER2 nuclear localization and circadian function. Isoform PML-6 inhibits specifically the activity of the tetrameric form of PKM. The nuclear isoforms (isoform PML-1, isoform PML-2, isoform PML-3, isoform PML-4 and isoform PML-5) in concert with SATB1 are involved in local chromatin-loop remodeling and gene expression regulation at the MHC-I locus. Isoform PML-2 is required for efficient IFN-gamma induced MHC II gene transcription via regulation of CIITA. Cytoplasmic PML is involved in the regulation of the TGF-beta signaling pathway. PML also regulates transcription activity of ELF4 and can act as an important mediator for TNF-alpha- and IFN-alpha-mediated inhibition of endothelial cell network formation and migration. Functionally, exhibits antiviral activity against both DNA and RNA viruses. The antiviral activity can involve one or several isoform(s) and can be enhanced by the permanent PML-NB-associated protein DAXX or by the recruitment of p53/TP53 within these structures. Isoform PML-4 restricts varicella zoster virus (VZV) via sequestration of virion capsids in PML-NBs thereby preventing their nuclear egress and inhibiting formation of infectious virus particles. The sumoylated isoform PML-4 restricts rabies virus by inhibiting viral mRNA and protein synthesis. The cytoplasmic isoform PML-14 can restrict herpes simplex virus-1 (HHV-1) replication by sequestering the viral E3 ubiquitin-protein ligase ICP0 in the cytoplasm. Isoform PML-6 shows restriction activity towards human cytomegalovirus (HHV-5) and influenza A virus strains PR8(H1N1) and ST364(H3N2). Sumoylated isoform PML-4 and isoform PML-12 show antiviral activity against encephalomyocarditis virus (EMCV) by promoting nuclear sequestration of viral polymerase (P3D-POL) within PML NBs. Isoform PML-3 exhibits antiviral activity against poliovirus by inducing apoptosis in infected cells through the recruitment and the activation of p53/TP53 in the PML-NBs. Isoform PML-3 represses human foamy virus (HFV) transcription by complexing the HFV transactivator, bel1/tas, preventing its binding to viral DNA. PML may positively regulate infectious hepatitis C viral (HCV) production and isoform PML-2 may enhance adenovirus transcription. Functions as an E3 SUMO-protein ligase that sumoylates (HHV-5) immediate early protein IE1, thereby participating in the antiviral response. Isoforms PML-3 and PML-6 display the highest levels of sumoylation activity. The polypeptide is Protein PML (PML) (Homo sapiens (Human)).